Consider the following 106-residue polypeptide: UPF0473 protein LCABL_08490 (106 aa).

This sequence belongs to the UPF0473 family.

The chain is UPF0473 protein LCABL_08490 from Lacticaseibacillus casei (strain BL23) (Lactobacillus casei).